Reading from the N-terminus, the 302-residue chain is Exodeoxyribonuclease (302 aa).

The catalysed reaction is Exonucleolytic cleavage in the 5'- to 3'-direction to yield nucleoside 5'-phosphates.. Its function is as follows. This enzyme is essential for phage DNA replication; it is believed to function in the removal of DNA-linked RNA primers. It is also necessary for host DNA degradation and phage genetic recombination. This is Exodeoxyribonuclease (6) from Enterobacteria phage T3 (Bacteriophage T3).